A 142-amino-acid polypeptide reads, in one-letter code: Small ribosomal subunit protein uS12 (142 aa).

The interval 1–30 (MGKTRGMGAARKLKNHRRRQRWADKSYKKS) is disordered. Positions 11–20 (RKLKNHRRRQ) are enriched in basic residues. Basic and acidic residues predominate over residues 21–30 (RWADKSYKKS). Pro61 is subject to Hydroxyproline.

Belongs to the universal ribosomal protein uS12 family.

The protein is Small ribosomal subunit protein uS12 (RPS23) of Fragaria ananassa (Strawberry).